Consider the following 285-residue polypeptide: Inositol monophosphatase 1 (285 aa).

The Mg(2+) site is built by Glu73, Asp93, Ile95, and Asp96. Glu73 contacts substrate. Substrate contacts are provided by residues 95–98 (IDGT), 198–200 (GTA), Glu217, and Asp224. Asp224 is a binding site for Mg(2+).

Belongs to the inositol monophosphatase superfamily. As to quaternary structure, homodimer. Requires Mg(2+) as cofactor.

The protein resides in the cytoplasm. The enzyme catalyses a myo-inositol phosphate + H2O = myo-inositol + phosphate. It catalyses the reaction 1D-myo-inositol 1-phosphate + H2O = myo-inositol + phosphate. It carries out the reaction 1D-myo-inositol 2-phosphate + H2O = myo-inositol + phosphate. The catalysed reaction is 1D-myo-inositol 3-phosphate + H2O = myo-inositol + phosphate. The enzyme catalyses 1D-myo-inositol 4-phosphate + H2O = myo-inositol + phosphate. It catalyses the reaction 1D-myo-inositol 5-phosphate + H2O = myo-inositol + phosphate. It carries out the reaction 1D-myo-inositol 6-phosphate + H2O = myo-inositol + phosphate. The catalysed reaction is scyllo-inositol 1-phosphate + H2O = scyllo-inositol + phosphate. The enzyme catalyses alpha-D-galactose 1-phosphate + H2O = D-galactose + phosphate. It catalyses the reaction alpha-D-glucose 1-phosphate + H2O = D-glucose + phosphate. It carries out the reaction D-glucose 6-phosphate + H2O = D-glucose + phosphate. The catalysed reaction is beta-D-fructose 1-phosphate + H2O = D-fructose + phosphate. The enzyme catalyses glycerol 2-phosphate + H2O = glycerol + phosphate. It catalyses the reaction adenosine 2'-phosphate + H2O = adenosine + phosphate. The protein operates within polyol metabolism; myo-inositol biosynthesis; myo-inositol from D-glucose 6-phosphate: step 2/2. With respect to regulation, inhibited by Li(+), Ca(2+) and Mn(2+), but also by Mg(2+) at concentrations above 3 mM. Its function is as follows. Phosphatase involved in the dephosphorylation of myo-inositol monophosphate to generate myo-inositol. Is also able to dephosphorylate scyllo-inositol-phosphate, myo-inositol 1,4-diphosphate, scyllo-inositol-1,3-diphosphate and scyllo-inositol-1,4-diphosphate. Also dephosphorylates in vitro other sugar-phosphates including D-galactose-1-phosphate, glucose-1-phosphate, glucose-6-phosphate, fructose-1-phosphate, beta-glycerophosphate and 2'-AMP. Responsible for the provision of inositol required for synthesis of phosphatidylinositol and polyphosphoinositides, and involved in maintaining normal brain function. Has been implicated as the pharmacological target for lithium Li(+) action in brain. In Xenopus laevis (African clawed frog), this protein is Inositol monophosphatase 1 (impa1).